The primary structure comprises 255 residues: Uracil-DNA glycosylase (255 aa).

Catalysis depends on Asp-93, which acts as the Proton acceptor.

Belongs to the uracil-DNA glycosylase (UDG) superfamily. UNG family.

The protein localises to the host nucleus. It carries out the reaction Hydrolyzes single-stranded DNA or mismatched double-stranded DNA and polynucleotides, releasing free uracil.. Its function is as follows. Excises uracil residues from the DNA which can arise as a result of misincorporation of dUMP residues by DNA polymerase or deamination of cytosines. Therefore may reduce deleterious uracil incorporation into the viral genome, particularly in terminally differentiated cells which lack DNA repair enzymes. The protein is Uracil-DNA glycosylase (U81) of Human herpesvirus 6A (strain Uganda-1102) (HHV-6 variant A).